The following is a 116-amino-acid chain: Galanin-like peptide (116 aa).

The first 24 residues, 1–24 (MAPPSVPLVLLLVLLLSLAETPAS), serve as a signal peptide directing secretion. Residues 87–116 (NVMETFAKPEIGDLGMLSMKIPKEEDVLKS) constitute a propeptide that is removed on maturation.

This sequence belongs to the galanin family. Isoform 2 is found in ganglia of ganglioneuroma and ganglioneuroblastoma, as well as in differentiated tumor cells of neuroblastoma tissues. Not found in undifferentiated neuroblasts. Isoform 2 is found in the skin, in pericytes covering microvascular arterioles and venules on their abluminal surfaces. In larger vessels, isoform 2 is expressed in layers of smooth muscle cells. Isoform 2 is not detected in endothelial cells.

The protein localises to the secreted. In terms of biological role, hypothalamic neuropeptide which binds to the G-protein-coupled galanin receptors (GALR1, GALR2 and GALR3). Involved in a large number of putative physiological functions in CNS homeostatic processes, including the regulation of gonadotropin-releasing hormone secretion. Exhibits potent and dose-dependent vasoconstrictor and anti-edema activity in the cutaneous microvasculature, a physiologic effects which does not appear to be mediated via GALR1 or GALR2. Exhibits antimicrobial activity against Gram-negative bacterias, inducing bacterial membrane blebbing. This Homo sapiens (Human) protein is Galanin-like peptide (GALP).